Here is a 1787-residue protein sequence, read N- to C-terminus: Chitin synthase 5 (1787 aa).

The segment at 1–26 (MASRRMSMYSVTSEGMGGPRGAGQQS) is disordered. N-linked (GlcNAc...) asparagine glycosylation occurs at Asn-164. The segment at 345–367 (RIRDGDESSDGGRGARTPNSAED) is disordered. N-linked (GlcNAc...) asparagine glycans are attached at residues Asn-643, Asn-657, Asn-668, and Asn-695. 2 helical membrane passes run 747 to 767 (MWVA…LRYV) and 783 to 803 (FVLC…IIFL). 2 N-linked (GlcNAc...) asparagine glycosylation sites follow: Asn-894 and Asn-1018. Residues 1055–1075 (FLLAFAIIMCAVILLKFVSAL) traverse the membrane as a helical segment. N-linked (GlcNAc...) asparagine glycosylation occurs at Asn-1420. Helical transmembrane passes span 1445–1465 (FVVF…VYLG), 1478–1498 (FPLI…LIFI), and 1506–1526 (IGWM…LPIY). N-linked (GlcNAc...) asparagine glycosylation is present at Asn-1533. The disordered stretch occupies residues 1628-1657 (SPNSPAPYQHMSRSPTAYAGPTPYSDNPAA). In terms of domain architecture, DEK-C spans 1729–1785 (GPDDFQIVDAIRAVLMEVDLDTVTKKQVRALVEQRLQTELVGERRTFLDRQIDNELA).

It belongs to the chitin synthase family. Class V subfamily.

It localises to the cell membrane. It carries out the reaction [(1-&gt;4)-N-acetyl-beta-D-glucosaminyl](n) + UDP-N-acetyl-alpha-D-glucosamine = [(1-&gt;4)-N-acetyl-beta-D-glucosaminyl](n+1) + UDP + H(+). In terms of biological role, polymerizes chitin, a structural polymer of the cell wall and septum, by transferring the sugar moiety of UDP-GlcNAc to the non-reducing end of the growing chitin polymer. May play a minor overlapping role with CHS6 in growth and differentiation. The polypeptide is Chitin synthase 5 (Pyricularia oryzae (strain 70-15 / ATCC MYA-4617 / FGSC 8958) (Rice blast fungus)).